The following is a 519-amino-acid chain: Light-independent protochlorophyllide reductase subunit B (519 aa).

Residue aspartate 36 participates in [4Fe-4S] cluster binding. Aspartate 274 acts as the Proton donor in catalysis. Residue 409–410 (GL) coordinates substrate. The segment at 426–465 (DEAGPSHHGGHSPKPSEAARTPDKVEERADPAPEAPQTGS) is disordered. A compositionally biased stretch (basic and acidic residues) spans 445 to 456 (RTPDKVEERADP).

The protein belongs to the ChlB/BchB/BchZ family. In terms of assembly, protochlorophyllide reductase is composed of three subunits; BchL, BchN and BchB. Forms a heterotetramer of two BchB and two BchN subunits. It depends on [4Fe-4S] cluster as a cofactor.

The catalysed reaction is chlorophyllide a + oxidized 2[4Fe-4S]-[ferredoxin] + 2 ADP + 2 phosphate = protochlorophyllide a + reduced 2[4Fe-4S]-[ferredoxin] + 2 ATP + 2 H2O. The protein operates within porphyrin-containing compound metabolism; bacteriochlorophyll biosynthesis (light-independent). Functionally, component of the dark-operative protochlorophyllide reductase (DPOR) that uses Mg-ATP and reduced ferredoxin to reduce ring D of protochlorophyllide (Pchlide) to form chlorophyllide a (Chlide). This reaction is light-independent. The NB-protein (BchN-BchB) is the catalytic component of the complex. The chain is Light-independent protochlorophyllide reductase subunit B from Jannaschia sp. (strain CCS1).